The sequence spans 233 residues: Ubiquinone biosynthesis O-methyltransferase (233 aa).

4 residues coordinate S-adenosyl-L-methionine: R37, G56, D77, and M121.

This sequence belongs to the methyltransferase superfamily. UbiG/COQ3 family.

It catalyses the reaction a 3-demethylubiquinol + S-adenosyl-L-methionine = a ubiquinol + S-adenosyl-L-homocysteine + H(+). It carries out the reaction a 3-(all-trans-polyprenyl)benzene-1,2-diol + S-adenosyl-L-methionine = a 2-methoxy-6-(all-trans-polyprenyl)phenol + S-adenosyl-L-homocysteine + H(+). The protein operates within cofactor biosynthesis; ubiquinone biosynthesis. In terms of biological role, O-methyltransferase that catalyzes the 2 O-methylation steps in the ubiquinone biosynthetic pathway. The chain is Ubiquinone biosynthesis O-methyltransferase from Azoarcus sp. (strain BH72).